Consider the following 3133-residue polypeptide: Cysteine repeat modular protein A (3133 aa).

Residues 1-39 (MDSASTSMSRVHPSGVYRRPLLPSGGPRSTSERDERVDL) form a disordered region. Positions 30-39 (TSERDERVDL) are enriched in basic and acidic residues. The helical transmembrane segment at 123–143 (LFLLFSSSPLLLLLLLHQFFI) threads the bilayer. 2 stretches are compositionally biased toward basic and acidic residues: residues 173-211 (TFEE…DGKE) and 301-311 (NESEKAERARL). Disordered regions lie at residues 173–234 (TFEE…EGRR) and 294–317 (VSPS…STPA). 3 N-linked (GlcNAc...) asparagine glycosylation sites follow: Asn-301, Asn-392, and Asn-470. The 68-residue stretch at 577 to 644 (DETLEQGKLY…DPHVRFDFCD (68 aa)) folds into the Kringle domain. 2 cysteine pairs are disulfide-bonded: Cys-599–Cys-631 and Cys-620–Cys-643. N-linked (GlcNAc...) asparagine glycosylation is found at Asn-1364 and Asn-1532. A run of 3 helical transmembrane segments spans residues 2229–2249 (MVWN…FNIV), 2276–2296 (LTGI…PSWI), and 2339–2359 (VFYA…MSII). An N-linked (GlcNAc...) asparagine glycan is attached at Asn-2369. Helical transmembrane passes span 2420–2440 (AAKF…FVYS), 2489–2509 (VGIT…FLVL), and 2539–2559 (WEMV…VALI). Asn-2565 carries N-linked (GlcNAc...) asparagine glycosylation. A helical membrane pass occupies residues 2569–2589 (VWLAVVIAVIFLIIHLVTQPF). A glycan (N-linked (GlcNAc...) asparagine) is linked at Asn-2602. The next 2 helical transmembrane spans lie at 2607–2627 (IWTI…SGSV) and 2632–2652 (LLFV…SLMF). 2 stretches are compositionally biased toward basic and acidic residues: residues 2827–2838 (FAAKDETPTAEE) and 3049–3069 (QEEN…DREI). Disordered stretches follow at residues 2827–2847 (FAAK…DERL) and 3049–3101 (QEEN…LPEG). A coiled-coil region spans residues 2955–3068 (SEALQKRNRK…KEEREEADRE (114 aa)). The span at 3083–3094 (GEDDTATIDDSS) shows a compositional bias: acidic residues.

As to quaternary structure, component of a complex, at least composed of cysteine repeat modular protein A (CRMPa), cysteine repeat modular protein B (CRMPb), micronemal protein 15 (MIC15) and thrombospondin type 1 domain-containing protein (TSP1).

It localises to the cell membrane. The protein resides in the endoplasmic reticulum. The protein localises to the golgi apparatus. In terms of biological role, required for triggering rhoptry secretion. Plays a role in host cell invasion. In Toxoplasma gondii, this protein is Cysteine repeat modular protein A.